A 92-amino-acid polypeptide reads, in one-letter code: MTRSLKKGPFVDHHLVAKVEKAIATKDKKPVKTWSRRSMVLPEFIGLTIAVHNGKQHVPVYVTDQMVGHKLGEFALTRTFKGHPADKKVQKK.

This sequence belongs to the universal ribosomal protein uS19 family.

In terms of biological role, protein S19 forms a complex with S13 that binds strongly to the 16S ribosomal RNA. This is Small ribosomal subunit protein uS19 from Acidovorax sp. (strain JS42).